Reading from the N-terminus, the 260-residue chain is tRNA pseudouridine synthase A (260 aa).

D51 (nucleophile) is an active-site residue. Residue Y109 coordinates substrate.

It belongs to the tRNA pseudouridine synthase TruA family. Homodimer.

It catalyses the reaction uridine(38/39/40) in tRNA = pseudouridine(38/39/40) in tRNA. Its function is as follows. Formation of pseudouridine at positions 38, 39 and 40 in the anticodon stem and loop of transfer RNAs. This chain is tRNA pseudouridine synthase A, found in Methylibium petroleiphilum (strain ATCC BAA-1232 / LMG 22953 / PM1).